The primary structure comprises 136 residues: Large ribosomal subunit protein uL16 (136 aa).

It belongs to the universal ribosomal protein uL16 family. In terms of assembly, part of the 50S ribosomal subunit.

In terms of biological role, binds 23S rRNA and is also seen to make contacts with the A and possibly P site tRNAs. The sequence is that of Large ribosomal subunit protein uL16 from Buchnera aphidicola subsp. Cinara cedri (strain Cc).